The sequence spans 823 residues: Molybdenum cofactor sulfurase (823 aa).

Lys-228 carries the N6-(pyridoxal phosphate)lysine modification. Residue Cys-392 is part of the active site. Positions Ser-628–Pro-667 are disordered. The 176-residue stretch at Ser-644 to Ser-819 folds into the MOSC domain.

The protein belongs to the class-V pyridoxal-phosphate-dependent aminotransferase family. MOCOS subfamily. It depends on pyridoxal 5'-phosphate as a cofactor.

It carries out the reaction Mo-molybdopterin + L-cysteine + AH2 = thio-Mo-molybdopterin + L-alanine + A + H2O. It functions in the pathway cofactor biosynthesis; molybdopterin biosynthesis. Functionally, sulfurates the molybdenum cofactor. Sulfation of molybdenum is essential for xanthine dehydrogenase (XDH) and aldehyde oxidase (ADO) enzymes in which molybdenum cofactor is liganded by 1 oxygen and 1 sulfur atom in active form. This Aspergillus niger (strain ATCC MYA-4892 / CBS 513.88 / FGSC A1513) protein is Molybdenum cofactor sulfurase.